The chain runs to 401 residues: Probable tRNA sulfurtransferase (401 aa).

The THUMP domain occupies 60-165; it reads EEICSLLKNI…EEATFLTIRN (106 aa). ATP is bound by residues 183-184, 208-209, arginine 265, glycine 287, and glutamine 296; these read ML and HF.

It belongs to the ThiI family.

The protein resides in the cytoplasm. The enzyme catalyses [ThiI sulfur-carrier protein]-S-sulfanyl-L-cysteine + a uridine in tRNA + 2 reduced [2Fe-2S]-[ferredoxin] + ATP + H(+) = [ThiI sulfur-carrier protein]-L-cysteine + a 4-thiouridine in tRNA + 2 oxidized [2Fe-2S]-[ferredoxin] + AMP + diphosphate. The catalysed reaction is [ThiS sulfur-carrier protein]-C-terminal Gly-Gly-AMP + S-sulfanyl-L-cysteinyl-[cysteine desulfurase] + AH2 = [ThiS sulfur-carrier protein]-C-terminal-Gly-aminoethanethioate + L-cysteinyl-[cysteine desulfurase] + A + AMP + 2 H(+). It participates in cofactor biosynthesis; thiamine diphosphate biosynthesis. Its function is as follows. Catalyzes the ATP-dependent transfer of a sulfur to tRNA to produce 4-thiouridine in position 8 of tRNAs, which functions as a near-UV photosensor. Also catalyzes the transfer of sulfur to the sulfur carrier protein ThiS, forming ThiS-thiocarboxylate. This is a step in the synthesis of thiazole, in the thiamine biosynthesis pathway. The sulfur is donated as persulfide by IscS. The polypeptide is Probable tRNA sulfurtransferase (Bacillus velezensis (strain DSM 23117 / BGSC 10A6 / LMG 26770 / FZB42) (Bacillus amyloliquefaciens subsp. plantarum)).